A 239-amino-acid polypeptide reads, in one-letter code: dITP/XTP pyrophosphatase (239 aa).

Thr-7–Lys-12 contacts substrate. Asp-74 acts as the Proton acceptor in catalysis. Asp-74 contacts Mg(2+). Residues Ser-75, Phe-182–Asp-185, Lys-214, and His-219–Arg-220 each bind substrate.

Belongs to the HAM1 NTPase family. As to quaternary structure, homodimer. Mg(2+) serves as cofactor.

It catalyses the reaction XTP + H2O = XMP + diphosphate + H(+). It carries out the reaction dITP + H2O = dIMP + diphosphate + H(+). The enzyme catalyses ITP + H2O = IMP + diphosphate + H(+). In terms of biological role, pyrophosphatase that catalyzes the hydrolysis of nucleoside triphosphates to their monophosphate derivatives, with a high preference for the non-canonical purine nucleotides XTP (xanthosine triphosphate), dITP (deoxyinosine triphosphate) and ITP. Seems to function as a house-cleaning enzyme that removes non-canonical purine nucleotides from the nucleotide pool, thus preventing their incorporation into DNA/RNA and avoiding chromosomal lesions. This Bifidobacterium animalis subsp. lactis (strain AD011) protein is dITP/XTP pyrophosphatase.